A 268-amino-acid chain; its full sequence is Shikimate dehydrogenase (NADP(+)) (268 aa).

Shikimate is bound by residues 13–15 (SLS) and Thr60. The Proton acceptor role is filled by Lys64. Glu76 serves as a coordination point for NADP(+). 2 residues coordinate shikimate: Asn85 and Asp100. NADP(+)-binding positions include 124–128 (GAGGA), 148–153 (NRTMAR), and Ile209. Tyr211 serves as a coordination point for shikimate. An NADP(+)-binding site is contributed by Gly232.

It belongs to the shikimate dehydrogenase family. Homodimer.

It catalyses the reaction shikimate + NADP(+) = 3-dehydroshikimate + NADPH + H(+). Its pathway is metabolic intermediate biosynthesis; chorismate biosynthesis; chorismate from D-erythrose 4-phosphate and phosphoenolpyruvate: step 4/7. In terms of biological role, involved in the biosynthesis of the chorismate, which leads to the biosynthesis of aromatic amino acids. Catalyzes the reversible NADPH linked reduction of 3-dehydroshikimate (DHSA) to yield shikimate (SA). The sequence is that of Shikimate dehydrogenase (NADP(+)) from Staphylococcus aureus (strain MSSA476).